The sequence spans 422 residues: Serine hydroxymethyltransferase (422 aa).

(6S)-5,6,7,8-tetrahydrofolate contacts are provided by residues Leu118 and 122-124 (GHL). At Lys227 the chain carries N6-(pyridoxal phosphate)lysine. Residues Glu243 and 351 to 353 (SPF) contribute to the (6S)-5,6,7,8-tetrahydrofolate site.

It belongs to the SHMT family. As to quaternary structure, homodimer. Pyridoxal 5'-phosphate is required as a cofactor.

The protein resides in the cytoplasm. It carries out the reaction (6R)-5,10-methylene-5,6,7,8-tetrahydrofolate + glycine + H2O = (6S)-5,6,7,8-tetrahydrofolate + L-serine. It participates in one-carbon metabolism; tetrahydrofolate interconversion. Its pathway is amino-acid biosynthesis; glycine biosynthesis; glycine from L-serine: step 1/1. Functionally, catalyzes the reversible interconversion of serine and glycine with tetrahydrofolate (THF) serving as the one-carbon carrier. This reaction serves as the major source of one-carbon groups required for the biosynthesis of purines, thymidylate, methionine, and other important biomolecules. Also exhibits THF-independent aldolase activity toward beta-hydroxyamino acids, producing glycine and aldehydes, via a retro-aldol mechanism. The polypeptide is Serine hydroxymethyltransferase (Fervidobacterium nodosum (strain ATCC 35602 / DSM 5306 / Rt17-B1)).